A 362-amino-acid chain; its full sequence is tRNA 2-selenouridine synthase (362 aa).

Residues 14–137 enclose the Rhodanese domain; that stretch reads LANETPIIDV…LRQATIEMTN (124 aa). C97 serves as the catalytic S-selanylcysteine intermediate.

It belongs to the SelU family. Monomer.

The enzyme catalyses 5-methylaminomethyl-2-thiouridine(34) in tRNA + selenophosphate + (2E)-geranyl diphosphate + H2O + H(+) = 5-methylaminomethyl-2-selenouridine(34) in tRNA + (2E)-thiogeraniol + phosphate + diphosphate. The catalysed reaction is 5-methylaminomethyl-2-thiouridine(34) in tRNA + (2E)-geranyl diphosphate = 5-methylaminomethyl-S-(2E)-geranyl-thiouridine(34) in tRNA + diphosphate. It carries out the reaction 5-methylaminomethyl-S-(2E)-geranyl-thiouridine(34) in tRNA + selenophosphate + H(+) = 5-methylaminomethyl-2-(Se-phospho)selenouridine(34) in tRNA + (2E)-thiogeraniol. It catalyses the reaction 5-methylaminomethyl-2-(Se-phospho)selenouridine(34) in tRNA + H2O = 5-methylaminomethyl-2-selenouridine(34) in tRNA + phosphate. Functionally, involved in the post-transcriptional modification of the uridine at the wobble position (U34) of tRNA(Lys), tRNA(Glu) and tRNA(Gln). Catalyzes the conversion of 2-thiouridine (S2U-RNA) to 2-selenouridine (Se2U-RNA). Acts in a two-step process involving geranylation of 2-thiouridine (S2U) to S-geranyl-2-thiouridine (geS2U) and subsequent selenation of the latter derivative to 2-selenouridine (Se2U) in the tRNA chain. This Proteus mirabilis (strain HI4320) protein is tRNA 2-selenouridine synthase.